The chain runs to 239 residues: MRLFVGLGNPGAKYARNRHNIGFMALDRIAEDHGFGPWRVKFQGQIAEGRLGREKVLLLKPETFMNRSGQSVGEAMRFYKLDSTDITVLHDELDLAPGKVKVKAGGGHAGHNGLRSIHDHIGAAYDRVRLGIGHPGRKEAVAGYVLHDFARADEDWLEDVLRGVSEGAPHLAAGDGARFMNSVALRTAPPRPSTGTGRPPAKTPARAEEPPAPAASPAPATAPLPDARSPLQKLVDRFK.

Tyr14 serves as a coordination point for tRNA. The active-site Proton acceptor is the His19. TRNA contacts are provided by Phe64, Asn66, and Asn112. Positions 186–239 (RTAPPRPSTGTGRPPAKTPARAEEPPAPAASPAPATAPLPDARSPLQKLVDRFK) are disordered. Positions 193-204 (STGTGRPPAKTP) are enriched in low complexity. Residues 210–222 (PPAPAASPAPATA) show a composition bias toward pro residues.

This sequence belongs to the PTH family. Monomer.

Its subcellular location is the cytoplasm. It carries out the reaction an N-acyl-L-alpha-aminoacyl-tRNA + H2O = an N-acyl-L-amino acid + a tRNA + H(+). In terms of biological role, hydrolyzes ribosome-free peptidyl-tRNAs (with 1 or more amino acids incorporated), which drop off the ribosome during protein synthesis, or as a result of ribosome stalling. Catalyzes the release of premature peptidyl moieties from peptidyl-tRNA molecules trapped in stalled 50S ribosomal subunits, and thus maintains levels of free tRNAs and 50S ribosomes. The polypeptide is Peptidyl-tRNA hydrolase (Ruegeria pomeroyi (strain ATCC 700808 / DSM 15171 / DSS-3) (Silicibacter pomeroyi)).